A 465-amino-acid chain; its full sequence is Uronate isomerase (465 aa).

The protein belongs to the metallo-dependent hydrolases superfamily. Uronate isomerase family.

It carries out the reaction D-glucuronate = D-fructuronate. The enzyme catalyses aldehydo-D-galacturonate = keto-D-tagaturonate. It participates in carbohydrate metabolism; pentose and glucuronate interconversion. In Streptococcus equi subsp. zooepidemicus (strain H70), this protein is Uronate isomerase.